The chain runs to 199 residues: Chromophore lyase CpcT/CpeT (199 aa).

This sequence belongs to the CpcT/CpeT biliprotein lyase family.

Its function is as follows. Covalently attaches a chromophore to Cys residue(s) of phycobiliproteins. This is Chromophore lyase CpcT/CpeT from Prochlorococcus marinus (strain NATL1A).